Consider the following 1172-residue polypeptide: Lysylphosphatidylglycerol biosynthesis bifunctional protein LysX (1172 aa).

Residues 1 to 34 (MGLHLTVPGLRRDGRGVQSNSHDTSSKTTADISR) form a disordered region. Residues 1–663 (MGLHLTVPGL…LLHHDGSAPD (663 aa)) are phosphatidylglycerol lysyltransferase. Residues 17-31 (VQSNSHDTSSKTTAD) show a composition bias toward polar residues. The next 7 membrane-spanning stretches (helical) occupy residues 80–100 (VPAA…LASV), 122–142 (FPDT…ALTA), 146–166 (IAWL…AAEI), 177–197 (FGEN…VLGY), 214–234 (AVWL…VELF), 272–292 (AIFG…LFLS), and 612–632 (VIPR…LPFS). The tract at residues 664–1172 (VSGLRQVGLT…TLPFPLAKPH (509 aa)) is lysine--tRNA ligase. Positions 726–804 (VSVSGRIMRI…SLIVSGWRLI (79 aa)) form a DNA-binding region, OB. Mg(2+) is bound by residues D1084 and E1091.

In the N-terminal section; belongs to the LPG synthetase family. This sequence in the C-terminal section; belongs to the class-II aminoacyl-tRNA synthetase family. Requires Mg(2+) as cofactor.

It is found in the cell membrane. The catalysed reaction is tRNA(Lys) + L-lysine + ATP = L-lysyl-tRNA(Lys) + AMP + diphosphate. It catalyses the reaction L-lysyl-tRNA(Lys) + a 1,2-diacyl-sn-glycero-3-phospho-(1'-sn-glycerol) = a 1,2-diacyl-sn-glycero-3-phospho-1'-(3'-O-L-lysyl)-sn-glycerol + tRNA(Lys). In terms of biological role, catalyzes the production of L-lysyl-tRNA(Lys)transfer and the transfer of a lysyl group from L-lysyl-tRNA(Lys) to membrane-bound phosphatidylglycerol (PG), which produces lysylphosphatidylglycerol (LPG), one of the components of the bacterial membrane with a positive net charge. LPG synthesis contributes to the resistance to cationic antimicrobial peptides (CAMPs) and likely protects M.tuberculosis against the CAMPs produced by competiting microorganisms (bacteriocins). In fact, the modification of anionic phosphatidylglycerol with positively charged L-lysine results in repulsion of the peptides. The chain is Lysylphosphatidylglycerol biosynthesis bifunctional protein LysX (lysX) from Mycobacterium tuberculosis (strain F11).